The chain runs to 189 residues: Peptidyl-tRNA hydrolase (189 aa).

Position 16 (Tyr-16) interacts with tRNA. Residue His-21 is the Proton acceptor of the active site. Positions 67, 69, and 115 each coordinate tRNA.

It belongs to the PTH family. In terms of assembly, monomer.

Its subcellular location is the cytoplasm. It carries out the reaction an N-acyl-L-alpha-aminoacyl-tRNA + H2O = an N-acyl-L-amino acid + a tRNA + H(+). Functionally, hydrolyzes ribosome-free peptidyl-tRNAs (with 1 or more amino acids incorporated), which drop off the ribosome during protein synthesis, or as a result of ribosome stalling. Its function is as follows. Catalyzes the release of premature peptidyl moieties from peptidyl-tRNA molecules trapped in stalled 50S ribosomal subunits, and thus maintains levels of free tRNAs and 50S ribosomes. The polypeptide is Peptidyl-tRNA hydrolase (Legionella pneumophila (strain Corby)).